Here is an 86-residue protein sequence, read N- to C-terminus: Large ribosomal subunit protein bL27 (86 aa).

The interval 1-21 (MAHKKGGGSSRNGRDSESKRL) is disordered.

Belongs to the bacterial ribosomal protein bL27 family.

In Rubrobacter xylanophilus (strain DSM 9941 / JCM 11954 / NBRC 16129 / PRD-1), this protein is Large ribosomal subunit protein bL27.